The following is a 409-amino-acid chain: Peptidase T (409 aa).

His78 lines the Zn(2+) pocket. Asp80 is a catalytic residue. Asp140 is a binding site for Zn(2+). The active-site Proton acceptor is the Glu173. Residues Glu174, Asp196, and His379 each coordinate Zn(2+).

Belongs to the peptidase M20B family. It depends on Zn(2+) as a cofactor.

Its subcellular location is the cytoplasm. The enzyme catalyses Release of the N-terminal residue from a tripeptide.. Functionally, cleaves the N-terminal amino acid of tripeptides. The polypeptide is Peptidase T (Serratia proteamaculans (strain 568)).